Consider the following 276-residue polypeptide: Large ribosomal subunit protein uL2 (276 aa).

Residues 223–276 form a disordered region; that stretch reads GAAMNPVDHPHGGGEGRAPRGRPPASPWGWQTKGLKTRKRRKPSSRFIIARRKK. Basic and acidic residues predominate over residues 230-240; that stretch reads DHPHGGGEGRA. Residues 257 to 276 show a composition bias toward basic residues; that stretch reads LKTRKRRKPSSRFIIARRKK.

This sequence belongs to the universal ribosomal protein uL2 family. Part of the 50S ribosomal subunit. Forms a bridge to the 30S subunit in the 70S ribosome.

In terms of biological role, one of the primary rRNA binding proteins. Required for association of the 30S and 50S subunits to form the 70S ribosome, for tRNA binding and peptide bond formation. It has been suggested to have peptidyltransferase activity; this is somewhat controversial. Makes several contacts with the 16S rRNA in the 70S ribosome. This Thermus thermophilus (strain ATCC BAA-163 / DSM 7039 / HB27) protein is Large ribosomal subunit protein uL2.